We begin with the raw amino-acid sequence, 312 residues long: Short-chain dehydrogenase/reductase pkfC (312 aa).

NADP(+) is bound by residues Lys-56, Asn-108, and Lys-140. Residue Ser-164 is the Proton donor of the active site. The NADP(+) site is built by Tyr-193 and Lys-197. Tyr-193 functions as the Proton acceptor in the catalytic mechanism. Lys-197 functions as the Lowers pKa of active site Tyr in the catalytic mechanism.

This sequence belongs to the short-chain dehydrogenases/reductases (SDR) family.

It functions in the pathway secondary metabolite biosynthesis. In terms of biological role, short-chain dehydrogenase/reductase; part of the gene cluster that mediates the biosynthesis of aspernidine A, a prenylated isoindolinone. The starting point of the biosynthesis of aspernidin A is the production of orsellinaldehyde by the non-reducing polyketide synthase pkfA. Hydroxylation, methylation of one of the phenol groups, and prenylation, presumably catalyzed by the prenyltransferase pkfE, would be needed to yield aspernidine D. Subsequently, the cytochrome P450 monooxygenase pkfB is responsible for hydroxylation of aspernidine D to yield aspernidine E. The dehydrogenase pkfF may be responsible for further oxidation of aspernidine E to form a dialdehyde intermediate which is further transformed in a series of steps, some of which are enzyme-mediated, to generate aspernidine A. The possibility that additional enzymes outside of the cluster are involved in aspernidine A biosynthesis cannot be excluded. The chain is Short-chain dehydrogenase/reductase pkfC from Emericella nidulans (strain FGSC A4 / ATCC 38163 / CBS 112.46 / NRRL 194 / M139) (Aspergillus nidulans).